Consider the following 484-residue polypeptide: CUGBP Elav-like family member 2 (484 aa).

Necessary for nuclear export stretches follow at residues 1–89 and 90–178; these read MNGA…PGMH and HPIQ…EGCS. 3 RRM domains span residues 16 to 99, 108 to 188, and 399 to 477; these read IKTF…PADS, RKLF…FADT, and ANLF…LKRS. The interval 188–240 is necessary for splicing activity; sequence TQKDKEQRRLQQQLAQQMQQLNTATWGNLTGLGGLTPQYLALLQQATSSSNLG. The tract at residues 347 to 399 is necessary for nuclear localization; the sequence is GLTNGTAGTMDALTQAYSGIQQYAAAALPTLYSQSLLQQQSAAGSQKEGPEGA. A necessary for nuclear localization and splicing activity region spans residues 426–484; that stretch reads ISAKVFIDKQTNLSKCFGFVSYDNPVSAQAAIQAMNGFQIGMKRLKVQLKRSKNDSKPY.

It belongs to the CELF/BRUNOL family. As to expression, expressed in heart.

It localises to the nucleus. It is found in the cytoplasm. In terms of biological role, RNA-binding protein implicated in the regulation of several post-transcriptional events. May be involved in mRNA translation repression and stability. Mediates exon inclusion in TNNT2 pre-mRNA. This Gallus gallus (Chicken) protein is CUGBP Elav-like family member 2 (CELF2).